The chain runs to 691 residues: POU domain, class 6, transcription factor 2 (691 aa).

A compositionally biased stretch (basic and acidic residues) spans 25–36 (MNAELRGEDKAA). 3 disordered regions span residues 25-93 (MNAE…PVGP), 186-297 (LQQQ…LQLV), and 435-461 (SQASMSQSPVRQASSSSSSSSSSSALS). Residues 186–195 (LQQQQQQQQQ) show a composition bias toward low complexity. Positions 196-210 (QPPPSTNQHPQPAPQ) are enriched in pro residues. Low complexity predominate over residues 211–220 (APSQSQQQPL). The span at 221–238 (QPTPPQQPPPASQQPPAP) shows a compositional bias: pro residues. Composition is skewed to low complexity over residues 239-280 (TSQL…SQSP) and 438-461 (SMSQSPVRQASSSSSSSSSSSALS). Positions 476 to 586 (VDGVNLEEIR…VLERWMAEAE (111 aa)) constitute a POU-specific domain. Residues 607–666 (KRKRRTSFTPQALEILNAHFEKNTHPSGQEMTEIAEKLNYDREVVRVWFCNKRQALKNTI) constitute a DNA-binding region (homeobox).

It belongs to the POU transcription factor family. Class-6 subfamily. Expressed only within the CNS, where its expression is restricted to the medical habenulla, to a dispersed population of neurons in the dorsal hypothalamus, and to subsets of ganglion and amacrine cells in the retina.

The protein localises to the nucleus. Probable transcription factor likely to be involved in early steps in the differentiation of amacrine and ganglion cells. Recognizes and binds to the DNA sequence 5'-ATGCAAAT-3'. Isoform 1 does not bind DNA. This is POU domain, class 6, transcription factor 2 (POU6F2) from Homo sapiens (Human).